Consider the following 350-residue polypeptide: S-adenosylmethionine:tRNA ribosyltransferase-isomerase (350 aa).

It belongs to the QueA family. As to quaternary structure, monomer.

The protein localises to the cytoplasm. The catalysed reaction is 7-aminomethyl-7-carbaguanosine(34) in tRNA + S-adenosyl-L-methionine = epoxyqueuosine(34) in tRNA + adenine + L-methionine + 2 H(+). It functions in the pathway tRNA modification; tRNA-queuosine biosynthesis. Its function is as follows. Transfers and isomerizes the ribose moiety from AdoMet to the 7-aminomethyl group of 7-deazaguanine (preQ1-tRNA) to give epoxyqueuosine (oQ-tRNA). The sequence is that of S-adenosylmethionine:tRNA ribosyltransferase-isomerase from Bacillus cereus (strain Q1).